A 96-amino-acid chain; its full sequence is Aspartyl/glutamyl-tRNA(Asn/Gln) amidotransferase subunit C (96 aa).

The protein belongs to the GatC family. As to quaternary structure, heterotrimer of A, B and C subunits.

It carries out the reaction L-glutamyl-tRNA(Gln) + L-glutamine + ATP + H2O = L-glutaminyl-tRNA(Gln) + L-glutamate + ADP + phosphate + H(+). The enzyme catalyses L-aspartyl-tRNA(Asn) + L-glutamine + ATP + H2O = L-asparaginyl-tRNA(Asn) + L-glutamate + ADP + phosphate + 2 H(+). Functionally, allows the formation of correctly charged Asn-tRNA(Asn) or Gln-tRNA(Gln) through the transamidation of misacylated Asp-tRNA(Asn) or Glu-tRNA(Gln) in organisms which lack either or both of asparaginyl-tRNA or glutaminyl-tRNA synthetases. The reaction takes place in the presence of glutamine and ATP through an activated phospho-Asp-tRNA(Asn) or phospho-Glu-tRNA(Gln). The polypeptide is Aspartyl/glutamyl-tRNA(Asn/Gln) amidotransferase subunit C (Trichormus variabilis (strain ATCC 29413 / PCC 7937) (Anabaena variabilis)).